Here is a 201-residue protein sequence, read N- to C-terminus: Recombination protein RecR (201 aa).

The segment at 57–72 adopts a C4-type zinc-finger fold; the sequence is CRSCRTFTEEDECNIC. Positions 81-176 constitute a Toprim domain; the sequence is GQLCVVEMPE…KVTRIAHGIP (96 aa).

Belongs to the RecR family.

In terms of biological role, may play a role in DNA repair. It seems to be involved in an RecBC-independent recombinational process of DNA repair. It may act with RecF and RecO. The sequence is that of Recombination protein RecR from Actinobacillus pleuropneumoniae serotype 5b (strain L20).